The sequence spans 115 residues: NADH-ubiquinone oxidoreductase chain 3 (115 aa).

3 consecutive transmembrane segments (helical) span residues 3–23 (VMLA…IAFW), 55–75 (FFLV…LLPL), and 84–104 (LPTM…SLAY).

It belongs to the complex I subunit 3 family. As to quaternary structure, core subunit of respiratory chain NADH dehydrogenase (Complex I) which is composed of 45 different subunits. Interacts with TMEM186. Interacts with TMEM242.

The protein localises to the mitochondrion inner membrane. The catalysed reaction is a ubiquinone + NADH + 5 H(+)(in) = a ubiquinol + NAD(+) + 4 H(+)(out). Functionally, core subunit of the mitochondrial membrane respiratory chain NADH dehydrogenase (Complex I) which catalyzes electron transfer from NADH through the respiratory chain, using ubiquinone as an electron acceptor. Essential for the catalytic activity of complex I. This chain is NADH-ubiquinone oxidoreductase chain 3, found in Felis catus (Cat).